The primary structure comprises 443 residues: Glutamyl-tRNA reductase (443 aa).

Residues 49–52 (TCNR), Ser109, 114–116 (ETQ), and Gln120 each bind substrate. The active-site Nucleophile is the Cys50. 189 to 194 (GAGKMS) serves as a coordination point for NADP(+).

Belongs to the glutamyl-tRNA reductase family. In terms of assembly, homodimer.

The catalysed reaction is (S)-4-amino-5-oxopentanoate + tRNA(Glu) + NADP(+) = L-glutamyl-tRNA(Glu) + NADPH + H(+). Its pathway is porphyrin-containing compound metabolism; protoporphyrin-IX biosynthesis; 5-aminolevulinate from L-glutamyl-tRNA(Glu): step 1/2. Functionally, catalyzes the NADPH-dependent reduction of glutamyl-tRNA(Glu) to glutamate 1-semialdehyde (GSA). This chain is Glutamyl-tRNA reductase, found in Heliobacterium mobile (Heliobacillus mobilis).